The primary structure comprises 286 residues: 3-hydroxyanthranilate 3,4-dioxygenase (286 aa).

The tract at residues Met1–Ile160 is domain A (catalytic). An O2-binding site is contributed by Arg43. His47, Glu53, and His91 together coordinate Fe cation. Glu53 is a substrate binding site. Residues Arg95 and Glu105 each coordinate substrate. A linker region spans residues Pro161–Ile177. A domain B region spans residues Met178–Gly286.

Belongs to the 3-HAO family. Monomer. Fe(2+) serves as cofactor.

It is found in the cytoplasm. It localises to the cytosol. The catalysed reaction is 3-hydroxyanthranilate + O2 = (2Z,4Z)-2-amino-3-carboxymuconate 6-semialdehyde. Its pathway is cofactor biosynthesis; NAD(+) biosynthesis; quinolinate from L-kynurenine: step 3/3. Functionally, catalyzes the oxidative ring opening of 3-hydroxyanthranilate to 2-amino-3-carboxymuconate semialdehyde, which spontaneously cyclizes to quinolinate. The protein is 3-hydroxyanthranilate 3,4-dioxygenase of Homo sapiens (Human).